The following is a 96-amino-acid chain: Putative pterin-4-alpha-carbinolamine dehydratase (96 aa).

It belongs to the pterin-4-alpha-carbinolamine dehydratase family.

The enzyme catalyses (4aS,6R)-4a-hydroxy-L-erythro-5,6,7,8-tetrahydrobiopterin = (6R)-L-erythro-6,7-dihydrobiopterin + H2O. This is Putative pterin-4-alpha-carbinolamine dehydratase from Prochlorococcus marinus (strain SARG / CCMP1375 / SS120).